A 205-amino-acid chain; its full sequence is GTP cyclohydrolase 1 (205 aa).

Zn(2+) contacts are provided by Cys-93, His-96, and Cys-166.

Belongs to the GTP cyclohydrolase I family. In terms of assembly, homomer.

It catalyses the reaction GTP + H2O = 7,8-dihydroneopterin 3'-triphosphate + formate + H(+). It functions in the pathway cofactor biosynthesis; 7,8-dihydroneopterin triphosphate biosynthesis; 7,8-dihydroneopterin triphosphate from GTP: step 1/1. The polypeptide is GTP cyclohydrolase 1 (Mycobacterium leprae (strain Br4923)).